Here is a 624-residue protein sequence, read N- to C-terminus: Actin-related protein 8 (624 aa).

Met-1 carries the N-acetylmethionine modification. A compositionally biased stretch (basic and acidic residues) spans 1-25; that stretch reads MTQAEKGEAENGKEKGGEKEKEQRG. Residues 1 to 29 form a disordered region; that stretch reads MTQAEKGEAENGKEKGGEKEKEQRGVKRP. The ATP site is built by Ser-55 and Thr-56. Ser-132 is modified (phosphoserine). Residue 283–286 coordinates ATP; sequence DVGD. Phosphoserine is present on Ser-412. A disordered region spans residues 430–462; that stretch reads SKQEQSAKATADRKSASKPIGFEGDLRGQSSDL.

This sequence belongs to the actin family. ARP8 subfamily. Component of the chromatin remodeling INO80 complex; specifically part of a complex module associated with the DBINO domain of INO80. Exists as monomers and dimers, but the dimer is most probably the biologically relevant form required for stable interactions with histones that exploits the twofold symmetry of the nucleosome core.

Its subcellular location is the nucleus. The protein resides in the chromosome. Its function is as follows. Plays an important role in the functional organization of mitotic chromosomes. Exhibits low basal ATPase activity, and unable to polymerize. Functionally, proposed core component of the chromatin remodeling INO80 complex which is involved in transcriptional regulation, DNA replication and probably DNA repair. Required for the recruitment of INO80 (and probably the INO80 complex) to sites of DNA damage Strongly prefer nucleosomes and H3-H4 tetramers over H2A-H2B dimers, suggesting it may act as a nucleosome recognition module within the complex. In Bos taurus (Bovine), this protein is Actin-related protein 8 (ACTR8).